The chain runs to 209 residues: Large ribosomal subunit protein bL25 (209 aa).

Disordered regions lie at residues 1-20 (MSKS…KGSS) and 190-209 (LDVS…TQTS). Over residues 8 to 20 (KAEKRERVGKGSS) the composition is skewed to basic and acidic residues. Acidic residues predominate over residues 192–209 (VSDETSEQEKDEGETQTS).

It belongs to the bacterial ribosomal protein bL25 family. CTC subfamily. In terms of assembly, part of the 50S ribosomal subunit; part of the 5S rRNA/L5/L18/L25 subcomplex. Contacts the 5S rRNA. Binds to the 5S rRNA independently of L5 and L18.

This is one of the proteins that binds to the 5S RNA in the ribosome where it forms part of the central protuberance. This Bartonella tribocorum (strain CIP 105476 / IBS 506) protein is Large ribosomal subunit protein bL25.